The following is a 497-amino-acid chain: Glycerol kinase (497 aa).

Position 12 (threonine 12) interacts with ADP. Residues threonine 12, threonine 13, and serine 14 each contribute to the ATP site. Residue threonine 12 coordinates sn-glycerol 3-phosphate. Arginine 16 is an ADP binding site. Residues arginine 82, glutamate 83, tyrosine 134, and aspartate 243 each contribute to the sn-glycerol 3-phosphate site. 5 residues coordinate glycerol: arginine 82, glutamate 83, tyrosine 134, aspartate 243, and glutamine 244. Residues threonine 265 and glycine 308 each coordinate ADP. The ATP site is built by threonine 265, glycine 308, glutamine 312, and glycine 411. Glycine 411 contributes to the ADP binding site.

This sequence belongs to the FGGY kinase family.

The catalysed reaction is glycerol + ATP = sn-glycerol 3-phosphate + ADP + H(+). It participates in polyol metabolism; glycerol degradation via glycerol kinase pathway; sn-glycerol 3-phosphate from glycerol: step 1/1. Its activity is regulated as follows. Inhibited by fructose 1,6-bisphosphate (FBP). Functionally, key enzyme in the regulation of glycerol uptake and metabolism. Catalyzes the phosphorylation of glycerol to yield sn-glycerol 3-phosphate. In Allorhizobium ampelinum (strain ATCC BAA-846 / DSM 112012 / S4) (Agrobacterium vitis (strain S4)), this protein is Glycerol kinase.